The sequence spans 180 residues: Adenine phosphoribosyltransferase (180 aa).

Belongs to the purine/pyrimidine phosphoribosyltransferase family. As to quaternary structure, homodimer.

It is found in the cytoplasm. The catalysed reaction is AMP + diphosphate = 5-phospho-alpha-D-ribose 1-diphosphate + adenine. It functions in the pathway purine metabolism; AMP biosynthesis via salvage pathway; AMP from adenine: step 1/1. Its function is as follows. Catalyzes a salvage reaction resulting in the formation of AMP, that is energically less costly than de novo synthesis. This chain is Adenine phosphoribosyltransferase, found in Haemophilus influenzae (strain PittEE).